The chain runs to 178 residues: uncharacterized protein (178 aa).

Disordered stretches follow at residues Asn-89–Ile-115 and Asp-136–Ala-178. Low complexity predominate over residues Ala-98–Thr-109. Residues Asp-167–Ala-178 are compositionally biased toward acidic residues.

It is found in the cytoplasm. It localises to the nucleus. This is an uncharacterized protein from Schizosaccharomyces pombe (strain 972 / ATCC 24843) (Fission yeast).